A 153-amino-acid chain; its full sequence is Large ribosomal subunit protein uL30 (153 aa).

Belongs to the universal ribosomal protein uL30 family. As to quaternary structure, part of the 50S ribosomal subunit.

The polypeptide is Large ribosomal subunit protein uL30 (Metallosphaera sedula (strain ATCC 51363 / DSM 5348 / JCM 9185 / NBRC 15509 / TH2)).